The chain runs to 298 residues: Tyrosine recombinase XerC (298 aa).

Residues 1–84 (MNHIQEAFLN…TLRTLYEYWM (84 aa)) form the Core-binding (CB) domain. Positions 105–286 (YLPQFSLEEE…SNQQLRKVYL (182 aa)) constitute a Tyr recombinase domain. Active-site residues include Arg-145, Lys-169, His-238, Arg-241, and His-264. Tyr-273 serves as the catalytic O-(3'-phospho-DNA)-tyrosine intermediate.

The protein belongs to the 'phage' integrase family. XerC subfamily. Forms a cyclic heterotetrameric complex composed of two molecules of XerC and two molecules of XerD.

The protein localises to the cytoplasm. Site-specific tyrosine recombinase, which acts by catalyzing the cutting and rejoining of the recombining DNA molecules. The XerC-XerD complex is essential to convert dimers of the bacterial chromosome into monomers to permit their segregation at cell division. It also contributes to the segregational stability of plasmids. The chain is Tyrosine recombinase XerC from Staphylococcus aureus.